The primary structure comprises 95 residues: Co-chaperonin GroES (95 aa).

It belongs to the GroES chaperonin family. As to quaternary structure, heptamer of 7 subunits arranged in a ring. Interacts with the chaperonin GroEL.

The protein resides in the cytoplasm. In terms of biological role, together with the chaperonin GroEL, plays an essential role in assisting protein folding. The GroEL-GroES system forms a nano-cage that allows encapsulation of the non-native substrate proteins and provides a physical environment optimized to promote and accelerate protein folding. GroES binds to the apical surface of the GroEL ring, thereby capping the opening of the GroEL channel. This chain is Co-chaperonin GroES, found in Desulfatibacillum aliphaticivorans.